Here is an 84-residue protein sequence, read N- to C-terminus: UPF0410 protein YmgE (84 aa).

3 helical membrane passes run 1–21, 27–47, and 58–78; these read MGII…KLIM, GGFF…GWLA, and GFNL…LGVF.

The protein belongs to the UPF0410 family.

The protein localises to the cell inner membrane. This Escherichia coli O127:H6 (strain E2348/69 / EPEC) protein is UPF0410 protein YmgE (ymgE).